Consider the following 34-residue polypeptide: Photosystem II reaction center protein M (34 aa).

The chain crosses the membrane as a helical span at residues 5 to 25; that stretch reads ILGLMAVALFILIPTSFLLIL.

Belongs to the PsbM family. PSII is composed of 1 copy each of membrane proteins PsbA, PsbB, PsbC, PsbD, PsbE, PsbF, PsbH, PsbI, PsbJ, PsbK, PsbL, PsbM, PsbT, PsbX, PsbY, PsbZ, Psb30/Ycf12, at least 3 peripheral proteins of the oxygen-evolving complex and a large number of cofactors. It forms dimeric complexes.

The protein resides in the plastid. It is found in the chloroplast thylakoid membrane. Functionally, one of the components of the core complex of photosystem II (PSII). PSII is a light-driven water:plastoquinone oxidoreductase that uses light energy to abstract electrons from H(2)O, generating O(2) and a proton gradient subsequently used for ATP formation. It consists of a core antenna complex that captures photons, and an electron transfer chain that converts photonic excitation into a charge separation. This subunit is found at the monomer-monomer interface. This is Photosystem II reaction center protein M from Tupiella akineta (Green alga).